The primary structure comprises 118 residues: Basic phospholipase A2 homolog 1 (118 aa).

Cystine bridges form between Cys-11-Cys-71, Cys-27-Cys-117, Cys-29-Cys-45, Cys-44-Cys-98, Cys-51-Cys-91, Cys-60-Cys-84, and Cys-78-Cys-89. Residues 106–118 (NKNFNIDTKKRCK) form an important for membrane-damaging activities in eukaryotes and bacteria; heparin-binding region.

This sequence belongs to the phospholipase A2 family. Group I subfamily. D49 sub-subfamily. As to expression, expressed by the venom gland.

It is found in the secreted. This is Basic phospholipase A2 homolog 1 from Laticauda colubrina (Yellow-lipped sea krait).